The primary structure comprises 549 residues: Chaperonin GroEL (549 aa).

ATP contacts are provided by residues 30–33 (TLGP), K51, 87–91 (DGTTT), G415, and D495.

This sequence belongs to the chaperonin (HSP60) family. Forms a cylinder of 14 subunits composed of two heptameric rings stacked back-to-back. Interacts with the co-chaperonin GroES.

Its subcellular location is the cytoplasm. The catalysed reaction is ATP + H2O + a folded polypeptide = ADP + phosphate + an unfolded polypeptide.. Together with its co-chaperonin GroES, plays an essential role in assisting protein folding. The GroEL-GroES system forms a nano-cage that allows encapsulation of the non-native substrate proteins and provides a physical environment optimized to promote and accelerate protein folding. This Colwellia maris protein is Chaperonin GroEL.